The chain runs to 319 residues: Acetyl-coenzyme A carboxylase carboxyl transferase subunit alpha (319 aa).

The 255-residue stretch at 39-293 (KLEKKVDRMR…HEAIARQLKE (255 aa)) folds into the CoA carboxyltransferase C-terminal domain.

Belongs to the AccA family. As to quaternary structure, acetyl-CoA carboxylase is a heterohexamer composed of biotin carboxyl carrier protein (AccB), biotin carboxylase (AccC) and two subunits each of ACCase subunit alpha (AccA) and ACCase subunit beta (AccD).

The protein resides in the cytoplasm. The enzyme catalyses N(6)-carboxybiotinyl-L-lysyl-[protein] + acetyl-CoA = N(6)-biotinyl-L-lysyl-[protein] + malonyl-CoA. Its pathway is lipid metabolism; malonyl-CoA biosynthesis; malonyl-CoA from acetyl-CoA: step 1/1. Its function is as follows. Component of the acetyl coenzyme A carboxylase (ACC) complex. First, biotin carboxylase catalyzes the carboxylation of biotin on its carrier protein (BCCP) and then the CO(2) group is transferred by the carboxyltransferase to acetyl-CoA to form malonyl-CoA. In Geobacter sulfurreducens (strain ATCC 51573 / DSM 12127 / PCA), this protein is Acetyl-coenzyme A carboxylase carboxyl transferase subunit alpha.